The following is a 584-amino-acid chain: DNA mismatch repair protein MutL (584 aa).

This sequence belongs to the DNA mismatch repair MutL/HexB family.

In terms of biological role, this protein is involved in the repair of mismatches in DNA. It is required for dam-dependent methyl-directed DNA mismatch repair. May act as a 'molecular matchmaker', a protein that promotes the formation of a stable complex between two or more DNA-binding proteins in an ATP-dependent manner without itself being part of a final effector complex. The chain is DNA mismatch repair protein MutL from Buchnera aphidicola subsp. Acyrthosiphon pisum (strain 5A).